The primary structure comprises 549 residues: Cobalt-dependent inorganic pyrophosphatase (549 aa).

2 CBS domains span residues 74–130 and 252–310; these read EMDK…IWDS and MTKD…VIQV. Residues Lys100, 116-119, Thr253, Val258, and 278-280 contribute to the AMP site; these read STSN and YSN.

The protein belongs to the PPase family. In terms of assembly, homodimer. Co(2+) serves as cofactor. The cofactor is Mn(2+). Requires Mg(2+) as cofactor.

It carries out the reaction diphosphate + H2O = 2 phosphate + H(+). With respect to regulation, inhibited by AMP and ADP with 25% and 35% of activity remaining, respectively, at saturating conditions. Activated 5-fold by diadenosine polyphosphates(Ap[n]A) with n&gt;2 (Ap3A, Ap4A, Ap5A, Ap6A) at saturating conditions. The protein is Cobalt-dependent inorganic pyrophosphatase of Clostridium perfringens (strain 13 / Type A).